The following is a 580-amino-acid chain: Glyco-Gag protein (580 aa).

The Cytoplasmic segment spans residues 1-51 (MSGASSGTAIGAHLFGVSPEYRVLIGDGGAGPSKSLSEVSFSVWYRSRAAR). The chain crosses the membrane as a helical span at residues 52 to 72 (LVILCLVASFLVPCLTFLIAE). Over 73–580 (AVMGQTVTTP…ANSTLLNLED (508 aa)) the chain is Extracellular. N-linked (GlcNAc...) asparagine; by host glycosylation occurs at Asn134. 3 disordered regions span residues 171–282 (VRPF…NRPQ), 491–514 (ETPE…RHKE), and 560–580 (RDCP…NLED). Residues 174–193 (FLPPPKPPTPLPQPLSPQPS) show a composition bias toward pro residues. A compositionally biased stretch (low complexity) spans 194–203 (APLTSSLYPV). Composition is skewed to pro residues over residues 204-220 (VPKP…PDPS) and 230-245 (EPPP…PSGP). Over residues 491-508 (ETPEEREERLWQRQEERD) the composition is skewed to basic and acidic residues. Over residues 571–580 (ANSTLLNLED) the composition is skewed to polar residues. An N-linked (GlcNAc...) asparagine; by host glycan is attached at Asn572.

Post-translationally, glycosylated by host. Cleaved by host near the middle of the molecule, releasing the c-terminal half containing capsid and nucleoprotein domains op GAG.

The protein localises to the host cell membrane. Functionally, plays a role in viral particle release. Presumably acts by facilitating the fission of the virion bud at the cell surface. This Feline leukemia virus protein is Glyco-Gag protein.